The chain runs to 418 residues: Metacaspase-2 (418 aa).

A disordered region spans residues 68–113 (PSPYTHAPHAPSPFNHAPPDSYPFTHAPPASSPFNHAPPGPPPPVH). The span at 70-80 (PYTHAPHAPSP) shows a compositional bias: low complexity. Residues 103–112 (HAPPGPPPPV) are compositionally biased toward pro residues. Residues histidine 200 and cysteine 256 contribute to the active site. The tract at residues 385–406 (PDEEEEVNQAPQKTQEPQLSAN) is disordered. Over residues 393–405 (QAPQKTQEPQLSA) the composition is skewed to polar residues.

It belongs to the peptidase C14B family.

Acts as a negative regulator of oxidative stress cell death and hypersensitive cell death response mediated by immune response. Acts via indirect or direct regulation of AMC1 at postranscriptional level. The chain is Metacaspase-2 (AMC2) from Arabidopsis thaliana (Mouse-ear cress).